The following is a 491-amino-acid chain: Galactose-1-phosphate uridylyltransferase 1 (491 aa).

Belongs to the galactose-1-phosphate uridylyltransferase type 2 family.

It localises to the cytoplasm. It catalyses the reaction alpha-D-galactose 1-phosphate + UDP-alpha-D-glucose = alpha-D-glucose 1-phosphate + UDP-alpha-D-galactose. Its pathway is carbohydrate metabolism; galactose metabolism. This chain is Galactose-1-phosphate uridylyltransferase 1 (galT1), found in Streptococcus pneumoniae serotype 4 (strain ATCC BAA-334 / TIGR4).